Reading from the N-terminus, the 454-residue chain is Zinc finger protein 474 (454 aa).

The tract at residues 48 to 85 is disordered; that stretch reads RGEKIKTNPRKNRPGTVILSKQSSRRIMSGSQPRPPVI. A compositionally biased stretch (polar residues) spans 66 to 79; it reads LSKQSSRRIMSGSQ. Residues 91 to 120 form a C2HC/C3H-type 1 zinc finger; that stretch reads GFRVCYICGREFGSQSLGIHEPQCLEKWRV. Zn(2+) is bound by residues Cys-95, Cys-98, His-110, and Cys-114. The tract at residues 125-146 is disordered; that stretch reads LPKHLRRPEPSKPPPFSGSGSY. 5 consecutive C2HC/C3H-type zinc fingers follow at residues 162 to 191, 218 to 247, 281 to 310, 352 to 381, and 425 to 454; these read QLLPCETCGRTFLPDRLLVHQRSCKQKVEG, RTVICYICGREFGTLSLPIHEPKCLEKWKV, QLVSCPNCSQTFAPDRLPVHQRSCKAQPSG, PTIVCYICGREYGTKSIAIHEPQCLKKWHN, and QLVPCNICGRTFLPDRLIVHQRSCKPKVAK. Zn(2+) contacts are provided by Cys-166, Cys-169, His-181, Cys-185, Cys-222, Cys-225, His-237, and Cys-241. A disordered region spans residues 256–282; sequence FRQPLPQKPQPLLTGQPKHAGPRQGQL. Residues Cys-285, Cys-288, His-300, Cys-304, Cys-356, Cys-359, His-371, Cys-375, Cys-429, Cys-432, His-444, and Cys-448 each contribute to the Zn(2+) site. Positions 299–345 are disordered; that stretch reads VHQRSCKAQPSGPKVQDLTLGSRGGLKESTNPKPQRNMAAPPVTDKP.

The cofactor is Zn(2+).

The chain is Zinc finger protein 474 (ZNF474) from Bos taurus (Bovine).